We begin with the raw amino-acid sequence, 201 residues long: dCTP deaminase, dUMP-forming (201 aa).

DCTP-binding positions include 101 to 106 (KSSLGR), Asp119, 127 to 129 (TLE), Gln148, Tyr162, and Gln174. Glu129 serves as the catalytic Proton donor/acceptor. Residues 166 to 183 (EYSSRYQGQRGPTASRSF) are compositionally biased toward polar residues. Positions 166–201 (EYSSRYQGQRGPTASRSFLNFHRTDVSGTEAGRSSS) are disordered.

Belongs to the dCTP deaminase family. Homotrimer.

The enzyme catalyses dCTP + 2 H2O = dUMP + NH4(+) + diphosphate. The protein operates within pyrimidine metabolism; dUMP biosynthesis; dUMP from dCTP: step 1/1. Its function is as follows. Bifunctional enzyme that catalyzes both the deamination of dCTP to dUTP and the hydrolysis of dUTP to dUMP without releasing the toxic dUTP intermediate. The protein is dCTP deaminase, dUMP-forming of Leifsonia xyli subsp. xyli (strain CTCB07).